The chain runs to 271 residues: MKLVFYGAGNMAQAIFTGIINSSNLDANDIYLTNKSNEQALKAFAEKLGVNYSYDDATLLKDADYVFLGTKPHDFDALATRIKPHITKDNCFISIMAGIPIDYIKQQLECQNPVARIMPNTNAQVGHSVTGISFSNNFDPKSKDEINDLVKAFGSVIEVSEDHLHQVTAITGSGPAFLYHVFEQYVKAGTKLGLEKEQVEESIRNLIIGTSKMIERSDLSMAQLRKNITSKGGTTQAGLDTLSQYDLVSIFEDCLNAAVDRSIELSNVEDQ.

Belongs to the pyrroline-5-carboxylate reductase family.

The protein resides in the cytoplasm. It catalyses the reaction L-proline + NADP(+) = (S)-1-pyrroline-5-carboxylate + NADPH + 2 H(+). The enzyme catalyses L-proline + NAD(+) = (S)-1-pyrroline-5-carboxylate + NADH + 2 H(+). Its pathway is amino-acid biosynthesis; L-proline biosynthesis; L-proline from L-glutamate 5-semialdehyde: step 1/1. Catalyzes the reduction of 1-pyrroline-5-carboxylate (PCA) to L-proline. The polypeptide is Pyrroline-5-carboxylate reductase (Staphylococcus aureus (strain Mu50 / ATCC 700699)).